Reading from the N-terminus, the 264-residue chain is Potassium channel regulatory protein (264 aa).

A BTB domain is found at 5 to 74; it reads DLVTLNVGGR…LRNHELLLPS (70 aa).

Can form homooligomers. Interacts with KCNA1 (via cytoplasmic N-terminal domain) and KCNA4.

The protein localises to the endoplasmic reticulum. Inhibits potassium fluxes in cells. May regulate Kv1 family channel proteins by retaining a fraction of channels in endomembranes. In Mus musculus (Mouse), this protein is Potassium channel regulatory protein (Kcnrg).